The primary structure comprises 53 residues: Antitoxin RelB3 (53 aa).

As to quaternary structure, forms heterodimers with RelE and possibly a heterotetramer RelE3-RelB3(2)-RelE3 from 2 heterodimers. The heterotetramer is probably not very stable in solution.

In terms of biological role, antitoxin component of a type II toxin-antitoxin (TA) system. Probably neutralizes the toxic activity of cognate toxin RelE. This Methanocaldococcus jannaschii (strain ATCC 43067 / DSM 2661 / JAL-1 / JCM 10045 / NBRC 100440) (Methanococcus jannaschii) protein is Antitoxin RelB3 (relB3).